The chain runs to 425 residues: Histidine--tRNA ligase (425 aa).

The protein belongs to the class-II aminoacyl-tRNA synthetase family. As to quaternary structure, homodimer.

It localises to the cytoplasm. It carries out the reaction tRNA(His) + L-histidine + ATP = L-histidyl-tRNA(His) + AMP + diphosphate + H(+). This Histophilus somni (strain 2336) (Haemophilus somnus) protein is Histidine--tRNA ligase.